Reading from the N-terminus, the 116-residue chain is Large ribosomal subunit protein bL20 (116 aa).

This sequence belongs to the bacterial ribosomal protein bL20 family.

In terms of biological role, binds directly to 23S ribosomal RNA and is necessary for the in vitro assembly process of the 50S ribosomal subunit. It is not involved in the protein synthesizing functions of that subunit. This is Large ribosomal subunit protein bL20 from Acaryochloris marina (strain MBIC 11017).